A 62-amino-acid chain; its full sequence is Large ribosomal subunit protein bL28 (62 aa).

Belongs to the bacterial ribosomal protein bL28 family.

The polypeptide is Large ribosomal subunit protein bL28 (Aliarcobacter butzleri (strain RM4018) (Arcobacter butzleri)).